The sequence spans 123 residues: Large ribosomal subunit protein bL19 (123 aa).

This sequence belongs to the bacterial ribosomal protein bL19 family.

Its function is as follows. This protein is located at the 30S-50S ribosomal subunit interface and may play a role in the structure and function of the aminoacyl-tRNA binding site. This is Large ribosomal subunit protein bL19 from Bdellovibrio bacteriovorus (strain ATCC 15356 / DSM 50701 / NCIMB 9529 / HD100).